The chain runs to 627 residues: uncharacterized protein (627 aa).

The segment covering M1–E20 has biased composition (basic and acidic residues). 2 disordered regions span residues M1–I22 and L578–V606. Residues S582 to E592 show a composition bias toward acidic residues.

This is an uncharacterized protein from Rickettsia prowazekii (strain Madrid E).